Consider the following 63-residue polypeptide: Bowman-birk type proteinase inhibitor 2 (63 aa).

Disulfide bonds link Cys7–Cys61, Cys8–Cys23, Cys11–Cys57, Cys13–Cys21, Cys31–Cys38, Cys35–Cys50, and Cys40–Cys48.

It belongs to the Bowman-Birk serine protease inhibitor family. Exists as a dimer in its native form.

Inhibits trypsin, chymotrypsin, plasmin and factor XIIa. Does not inhibit factor Xa, thrombin, human plasma kallikrein, porcine pancreatic kallikrein and human urinary kallikrein. In Amburana cearensis (Cerejeira), this protein is Bowman-birk type proteinase inhibitor 2.